Reading from the N-terminus, the 212-residue chain is Deoxyribose-phosphate aldolase (212 aa).

Asp89 acts as the Proton donor/acceptor in catalysis. The active-site Schiff-base intermediate with acetaldehyde is Lys151. Lys180 functions as the Proton donor/acceptor in the catalytic mechanism.

This sequence belongs to the DeoC/FbaB aldolase family. DeoC type 1 subfamily.

The protein resides in the cytoplasm. The catalysed reaction is 2-deoxy-D-ribose 5-phosphate = D-glyceraldehyde 3-phosphate + acetaldehyde. The protein operates within carbohydrate degradation; 2-deoxy-D-ribose 1-phosphate degradation; D-glyceraldehyde 3-phosphate and acetaldehyde from 2-deoxy-alpha-D-ribose 1-phosphate: step 2/2. In terms of biological role, catalyzes a reversible aldol reaction between acetaldehyde and D-glyceraldehyde 3-phosphate to generate 2-deoxy-D-ribose 5-phosphate. This Clostridium botulinum (strain Loch Maree / Type A3) protein is Deoxyribose-phosphate aldolase.